Consider the following 338-residue polypeptide: Ketol-acid reductoisomerase (NADP(+)) (338 aa).

The region spanning methionine 1–threonine 181 is the KARI N-terminal Rossmann domain. Residues tyrosine 24–glutamine 27, arginine 47, serine 50, threonine 52, and aspartate 82–glutamine 85 contribute to the NADP(+) site. Histidine 107 is a catalytic residue. Position 133 (glycine 133) interacts with NADP(+). The region spanning threonine 182–isoleucine 327 is the KARI C-terminal knotted domain. Residues aspartate 190, glutamate 194, glutamate 226, and glutamate 230 each contribute to the Mg(2+) site. Residue serine 251 coordinates substrate.

Belongs to the ketol-acid reductoisomerase family. The cofactor is Mg(2+).

The catalysed reaction is (2R)-2,3-dihydroxy-3-methylbutanoate + NADP(+) = (2S)-2-acetolactate + NADPH + H(+). It catalyses the reaction (2R,3R)-2,3-dihydroxy-3-methylpentanoate + NADP(+) = (S)-2-ethyl-2-hydroxy-3-oxobutanoate + NADPH + H(+). The protein operates within amino-acid biosynthesis; L-isoleucine biosynthesis; L-isoleucine from 2-oxobutanoate: step 2/4. It functions in the pathway amino-acid biosynthesis; L-valine biosynthesis; L-valine from pyruvate: step 2/4. Functionally, involved in the biosynthesis of branched-chain amino acids (BCAA). Catalyzes an alkyl-migration followed by a ketol-acid reduction of (S)-2-acetolactate (S2AL) to yield (R)-2,3-dihydroxy-isovalerate. In the isomerase reaction, S2AL is rearranged via a Mg-dependent methyl migration to produce 3-hydroxy-3-methyl-2-ketobutyrate (HMKB). In the reductase reaction, this 2-ketoacid undergoes a metal-dependent reduction by NADPH to yield (R)-2,3-dihydroxy-isovalerate. This Pseudomonas entomophila (strain L48) protein is Ketol-acid reductoisomerase (NADP(+)).